Consider the following 252-residue polypeptide: Chitooligosaccharide deacetylase (252 aa).

Mg(2+) is bound by residues H61 and H125.

It belongs to the YdjC deacetylase family. ChbG subfamily. Homodimer. It depends on Mg(2+) as a cofactor.

Its subcellular location is the cytoplasm. It carries out the reaction N,N'-diacetylchitobiose + H2O = N-acetyl-beta-D-glucosaminyl-(1-&gt;4)-D-glucosamine + acetate. The catalysed reaction is diacetylchitobiose-6'-phosphate + H2O = N'-monoacetylchitobiose-6'-phosphate + acetate. Its pathway is glycan degradation; chitin degradation. Involved in the degradation of chitin. ChbG is essential for growth on the acetylated chitooligosaccharides chitobiose and chitotriose but is dispensable for growth on cellobiose and chitosan dimer, the deacetylated form of chitobiose. Deacetylation of chitobiose-6-P and chitotriose-6-P is necessary for both the activation of the chb promoter by the regulatory protein ChbR and the hydrolysis of phosphorylated beta-glucosides by the phospho-beta-glucosidase ChbF. Catalyzes the removal of only one acetyl group from chitobiose-6-P to yield monoacetylchitobiose-6-P, the inducer of ChbR and the substrate of ChbF. In Salmonella schwarzengrund (strain CVM19633), this protein is Chitooligosaccharide deacetylase.